The following is a 251-amino-acid chain: D-aminoacyl-tRNA deacylase (251 aa).

This sequence belongs to the DtdA deacylase family. Monomer. It depends on Zn(2+) as a cofactor.

The enzyme catalyses a D-aminoacyl-tRNA + H2O = a tRNA + a D-alpha-amino acid + H(+). It carries out the reaction glycyl-tRNA(Ala) + H2O = tRNA(Ala) + glycine + H(+). Its function is as follows. D-aminoacyl-tRNA deacylase with broad substrate specificity. By recycling D-aminoacyl-tRNA to D-amino acids and free tRNA molecules, this enzyme counteracts the toxicity associated with the formation of D-aminoacyl-tRNA entities in vivo. The chain is D-aminoacyl-tRNA deacylase from Pyrobaculum aerophilum (strain ATCC 51768 / DSM 7523 / JCM 9630 / CIP 104966 / NBRC 100827 / IM2).